The sequence spans 152 residues: FMN reductase (NADH) RutF (152 aa).

This sequence belongs to the non-flavoprotein flavin reductase family. RutF subfamily.

The catalysed reaction is FMNH2 + NAD(+) = FMN + NADH + 2 H(+). Functionally, catalyzes the reduction of FMN to FMNH2 which is used to reduce pyrimidine by RutA via the Rut pathway. This chain is FMN reductase (NADH) RutF, found in Shigella flexneri.